A 244-amino-acid chain; its full sequence is Uridylate kinase (244 aa).

An ATP-binding site is contributed by Lys17–Gly20. Position 59 (Gly59) interacts with UMP. 2 residues coordinate ATP: Gly60 and Arg64. Residues Asp79 and Thr140–Thr147 each bind UMP. Residues Thr167, Tyr173, and Asp176 each contribute to the ATP site.

It belongs to the UMP kinase family. Homohexamer.

The protein localises to the cytoplasm. The enzyme catalyses UMP + ATP = UDP + ADP. The protein operates within pyrimidine metabolism; CTP biosynthesis via de novo pathway; UDP from UMP (UMPK route): step 1/1. Inhibited by UTP. Catalyzes the reversible phosphorylation of UMP to UDP. The sequence is that of Uridylate kinase from Hahella chejuensis (strain KCTC 2396).